We begin with the raw amino-acid sequence, 569 residues long: Urease subunit alpha (569 aa).

The region spanning 131 to 569 (GGMDAHIHFI…LPMAQRYFLF (439 aa)) is the Urease domain. 3 residues coordinate Ni(2+): His136, His138, and Lys218. Residue Lys218 is modified to N6-carboxylysine. Position 220 (His220) interacts with substrate. Positions 247 and 273 each coordinate Ni(2+). Residue His321 is the Proton donor of the active site. A Ni(2+)-binding site is contributed by Asp361.

This sequence belongs to the metallo-dependent hydrolases superfamily. Urease alpha subunit family. In terms of assembly, heterotrimer of UreA (gamma), UreB (beta) and UreC (alpha) subunits. Three heterotrimers associate to form the active enzyme. Ni cation is required as a cofactor. Carboxylation allows a single lysine to coordinate two nickel ions.

It is found in the cytoplasm. It carries out the reaction urea + 2 H2O + H(+) = hydrogencarbonate + 2 NH4(+). Its pathway is nitrogen metabolism; urea degradation; CO(2) and NH(3) from urea (urease route): step 1/1. The sequence is that of Urease subunit alpha from Rhizobium rhizogenes (strain K84 / ATCC BAA-868) (Agrobacterium radiobacter).